The following is a 974-amino-acid chain: Isoleucine--tRNA ligase (974 aa).

Residues 69 to 79 carry the 'HIGH' region motif; that stretch reads PYANGALHMGH. Residue E585 coordinates L-isoleucyl-5'-AMP. The short motif at 626 to 630 is the 'KMSKS' region element; it reads KMSKS. K629 serves as a coordination point for ATP. Residues C939, C942, C959, and C962 each contribute to the Zn(2+) site.

Belongs to the class-I aminoacyl-tRNA synthetase family. IleS type 1 subfamily. As to quaternary structure, monomer. Zn(2+) is required as a cofactor.

The protein localises to the cytoplasm. It catalyses the reaction tRNA(Ile) + L-isoleucine + ATP = L-isoleucyl-tRNA(Ile) + AMP + diphosphate. Catalyzes the attachment of isoleucine to tRNA(Ile). As IleRS can inadvertently accommodate and process structurally similar amino acids such as valine, to avoid such errors it has two additional distinct tRNA(Ile)-dependent editing activities. One activity is designated as 'pretransfer' editing and involves the hydrolysis of activated Val-AMP. The other activity is designated 'posttransfer' editing and involves deacylation of mischarged Val-tRNA(Ile). The chain is Isoleucine--tRNA ligase from Parasynechococcus marenigrum (strain WH8102).